The sequence spans 366 residues: Dof zinc finger protein DOF1.3 (366 aa).

The interval Asp22 to Lys103 is disordered. Composition is skewed to low complexity over residues Ser25 to Leu45 and Thr56 to Asn69. Basic and acidic residues-rich tracts occupy residues Glu70–Ser83 and Glu91–Lys103. A Dof-type zinc finger spans residues Leu105–Gly159. Zn(2+) is bound by residues Cys107, Cys110, Cys132, and Cys135.

Its subcellular location is the nucleus. Functionally, transcription factor that binds specifically to a 5'-AA[AG]G-3' consensus core sequence. In Arabidopsis thaliana (Mouse-ear cress), this protein is Dof zinc finger protein DOF1.3 (DOF1.3).